The primary structure comprises 312 residues: Olfactory receptor 2C1 (312 aa).

Over methionine 1–glutamate 24 the chain is Extracellular. N-linked (GlcNAc...) asparagine glycosylation occurs at asparagine 6. Residues isoleucine 25 to leucine 48 traverse the membrane as a helical segment. Topologically, residues serine 49–threonine 57 are cytoplasmic. The helical transmembrane segment at proline 58–proline 79 threads the bilayer. The Extracellular segment spans residues glutamine 80–glutamine 100. A disulfide bridge connects residues cysteine 97 and cysteine 189. The chain crosses the membrane as a helical span at residues leucine 101 to phenylalanine 120. Residues aspartate 121–arginine 139 lie on the Cytoplasmic side of the membrane. Residues leucine 140–serine 160 traverse the membrane as a helical segment. Residues threonine 161–asparagine 200 lie on the Extracellular side of the membrane. The chain crosses the membrane as a helical span at residues glycine 201–alanine 222. At glutamine 223–lysine 236 the chain is on the cytoplasmic side. A helical transmembrane segment spans residues alanine 237–leucine 261. Residues proline 262 to lysine 272 lie on the Extracellular side of the membrane. Residues phenylalanine 273–leucine 292 traverse the membrane as a helical segment. Topologically, residues arginine 293–serine 312 are cytoplasmic.

It belongs to the G-protein coupled receptor 1 family. As to expression, olfactory epithelium. Present in various subcellular compartments of the olfactory sensory neurons, particularly in the axonal processes and neve terminals.

Its subcellular location is the cell membrane. Functionally, olfactory receptor that is activated by the binding of organosulfur odorants with thioether groups such as (methylthio)methanetiol (MTMT). Also binds odorants acetophenone and benzaldehyde. The activity of this receptor is mediated by G proteins which activate adenylyl cyclase. May be involved in the molecular processes underlying fasciculation and targeting of olfactory axons. This chain is Olfactory receptor 2C1, found in Mus musculus (Mouse).